The primary structure comprises 150 residues: Small ribosomal subunit protein eS19 (150 aa).

This sequence belongs to the eukaryotic ribosomal protein eS19 family. As to quaternary structure, part of the 30S ribosomal subunit.

May be involved in maturation of the 30S ribosomal subunit. In Pyrococcus abyssi (strain GE5 / Orsay), this protein is Small ribosomal subunit protein eS19 (rps19e).